Reading from the N-terminus, the 546-residue chain is (+)-epi-alpha-bisabolol synthase (546 aa).

Asp-297, Asp-301, Asp-441, Thr-445, and Glu-449 together coordinate Mg(2+). Positions 297-301 (DDIYD) match the DDXXD motif motif.

The protein belongs to the terpene synthase family. It depends on Mg(2+) as a cofactor.

The catalysed reaction is (2E,6E)-farnesyl diphosphate + H2O = (+)-epi-alpha-bisabolol + diphosphate. It participates in secondary metabolite biosynthesis; terpenoid biosynthesis. Sesquiterpene synthase involved in the biosynthesis of (+)-epi-alpha-bisabolol, a precursor of the natural sweetner hernandulcin. This is (+)-epi-alpha-bisabolol synthase from Phyla dulcis (Aztec sweet herb).